Here is a 497-residue protein sequence, read N- to C-terminus: MSKYILALDQGTTSSRAILFTREGDIKQIAQKEFTQIYPQPGWVEHNANEIFDTQSWVMTECLQRAGVNASEVAAIGITNQRETTVVWDRKSGAPVHNAIVWQDRRTASICDEMKKRGLAETIREKTGLVIDAYFSGTKVKWILDNVPGARAKAERGELCFGTIDTWVIWNLTKGKEHVTDESNASRTMLFNIHTGDWDEELLKILDVPRSMLPRVAGSSEVVAETHPEFLGKAVPVSGIAGDQQAATFGNACLTEGMAKNTYGTGCFMLLNTGKQAHISKNNLLTTTGWNTPSGRYYCLEGSVFIAGAVVQWLRDGLGIIQSAPEVEQLALSVPDNGGVVLVPAFAGLGAPHWDQYARGTMVGVTRGTTKAHIARAALESIALQTLDIMDCMQKDAGINLAALRADGGATRNNLLMQFQADVLGVPVERPKVTETTALGAAYLAGLAVGFWKSEDEITAMWQLDRRFEPNMSAEVREKLVYNWKRAVERSKEWAED.

T12 lines the ADP pocket. The ATP site is built by T12, T13, and S14. T12 is a sn-glycerol 3-phosphate binding site. ADP is bound at residue R16. The sn-glycerol 3-phosphate site is built by R82, E83, Y134, and D243. Glycerol contacts are provided by R82, E83, Y134, D243, and Q244. Residues T265 and G308 each contribute to the ADP site. The ATP site is built by T265, G308, Q312, and G409. 2 residues coordinate ADP: G409 and N413.

It belongs to the FGGY kinase family.

It carries out the reaction glycerol + ATP = sn-glycerol 3-phosphate + ADP + H(+). It functions in the pathway polyol metabolism; glycerol degradation via glycerol kinase pathway; sn-glycerol 3-phosphate from glycerol: step 1/1. Its activity is regulated as follows. Inhibited by fructose 1,6-bisphosphate (FBP). Key enzyme in the regulation of glycerol uptake and metabolism. Catalyzes the phosphorylation of glycerol to yield sn-glycerol 3-phosphate. In Oleidesulfovibrio alaskensis (strain ATCC BAA-1058 / DSM 17464 / G20) (Desulfovibrio alaskensis), this protein is Glycerol kinase.